We begin with the raw amino-acid sequence, 365 residues long: MANISGFGITRSLIHSFDPHGKHYRPTIKPTTGFSASADAERLHRSMKGPGTNELAIINILARRTNYERQEICQSYKSLYKQDLKDDLKSDTSGDFRKVLCQLIVDTPYMLAKSLYYAMKGLGTNDRVLIEIFTTLWNDEMKAVADAYKQVLKDKGSEESERSLVTDMKKETCGDYEYALLSLVQAERDDIPILQLKAIPDKGVNSIINHELAEADAKDLYASGAGRVGTSERRITRVICNRTPYQLYLTSEIYFKMYGKTLLEHIESETSGDYRKLLVAVLRYAIDRPSLIAEWLHDSMAGLGTKDYALMRLLITRSEIDLQDIMDAYESIYGKSLLNAVKDDTSGDYRRTLCVLMGEIYNQQQ.

Annexin repeat units follow at residues 34-105 (FSAS…QLIV), 106-185 (DTPY…SLVQ), 211-283 (ELAE…AVLR), and 287-358 (DRPS…VLMG). Residues M47, G49, G51, T52, E54, D91, M119, G121, G123, D126, K169, E171, T172, E177, D273, M300, G302, L303, G304, and D344 each coordinate Ca(2+).

Belongs to the annexin family. Homodimer.

It is found in the tegument. It localises to the secreted. The protein resides in the extracellular exosome. Its subcellular location is the host cell. Functionally, involved in reproduction of the worm. Involved in host-parasite interaction. Delivered into the host cell by means of parasite exosomes. Binds to acidic phospholipid membranes in a calcium-dependent manner in vitro. Causes aggregation of liposomes in the presence of calcium, but not in its absence. Likely to promote membrane fusion. May provide structural integrity within the tegument. This Schistosoma mansoni (Blood fluke) protein is Annexin B22.